The primary structure comprises 638 residues: ATP-dependent zinc metalloprotease FtsH (638 aa).

Topologically, residues methionine 1 to arginine 11 are cytoplasmic. The helical transmembrane segment at serine 12–glycine 32 threads the bilayer. Topologically, residues asparagine 33–glycine 114 are lumenal. A helical membrane pass occupies residues leucine 115–phenylalanine 135. Residues leucine 136 to alanine 638 are Cytoplasmic-facing. Glycine 209–threonine 216 is a binding site for ATP. Zn(2+) is bound at residue histidine 431. Glutamate 432 is an active-site residue. Residues histidine 435 and aspartate 510 each coordinate Zn(2+).

In the central section; belongs to the AAA ATPase family. This sequence in the C-terminal section; belongs to the peptidase M41 family. As to quaternary structure, homohexamer. Zn(2+) serves as cofactor.

It localises to the cellular thylakoid membrane. Acts as a processive, ATP-dependent zinc metallopeptidase for both cytoplasmic and membrane proteins. Plays a role in the quality control of integral membrane proteins. The polypeptide is ATP-dependent zinc metalloprotease FtsH (Synechococcus sp. (strain JA-2-3B'a(2-13)) (Cyanobacteria bacterium Yellowstone B-Prime)).